The primary structure comprises 890 residues: Alanine--tRNA ligase (890 aa).

Positions 568, 572, 680, and 684 each coordinate Zn(2+).

This sequence belongs to the class-II aminoacyl-tRNA synthetase family. Requires Zn(2+) as cofactor.

Its subcellular location is the cytoplasm. It carries out the reaction tRNA(Ala) + L-alanine + ATP = L-alanyl-tRNA(Ala) + AMP + diphosphate. In terms of biological role, catalyzes the attachment of alanine to tRNA(Ala) in a two-step reaction: alanine is first activated by ATP to form Ala-AMP and then transferred to the acceptor end of tRNA(Ala). Also edits incorrectly charged Ser-tRNA(Ala) and Gly-tRNA(Ala) via its editing domain. The sequence is that of Alanine--tRNA ligase from Psychrobacter cryohalolentis (strain ATCC BAA-1226 / DSM 17306 / VKM B-2378 / K5).